We begin with the raw amino-acid sequence, 130 residues long: UPF0251 protein Mevan_1492 (130 aa).

The protein belongs to the UPF0251 family.

This is UPF0251 protein Mevan_1492 from Methanococcus vannielii (strain ATCC 35089 / DSM 1224 / JCM 13029 / OCM 148 / SB).